The primary structure comprises 385 residues: Putative ESX-1 scaffolding and assembly protein SaeC (385 aa).

The protein localises to the cytoplasm. May be involved in assembly of the ESX-1 / type VII specialized secretion system (T7SS), which exports several proteins including EsxA and EsxB. Involved in DNA conjugation in recipient (MKD8) strain. The chain is Putative ESX-1 scaffolding and assembly protein SaeC from Mycolicibacterium smegmatis (strain ATCC 700084 / mc(2)155) (Mycobacterium smegmatis).